Consider the following 275-residue polypeptide: Transcriptional coregulator psa-3 (275 aa).

The MEIS N-terminal domain maps to 91-161 (TDDIKRLFQS…RRTVCHEALV (71 aa)). The tract at residues 239 to 275 (QLPPNFLKPSNEKSPEKSEEEKSQKPSSSPKSPSLSD) is disordered. Over residues 248–262 (SNEKSPEKSEEEKSQ) the composition is skewed to basic and acidic residues. Positions 263-275 (KPSSSPKSPSLSD) are enriched in low complexity.

As to quaternary structure, interacts with homeobox protein ceh-20; the interaction is direct, facilitates nuclear localization of ceh-20 and may stabilize interaction of a ceh-20-nob-1 complex with DNA.

The protein resides in the nucleus. Probable transcription coregulator. Required for asymmetric cell divisions of the T hypodermal cells, and cell fate determination, in concert with homeobox proteins nob-1 and ceh-20. Acts downstream of the Wnt signaling pathway, and of ceh-20 and nob-1. This Caenorhabditis elegans protein is Transcriptional coregulator psa-3.